We begin with the raw amino-acid sequence, 464 residues long: Cysteine--tRNA ligase (464 aa).

A Zn(2+)-binding site is contributed by Cys30. Residues 32-42 (MTVYDYCHIGH) carry the 'HIGH' region motif. Cys214, His239, and Glu243 together coordinate Zn(2+). A 'KMSKS' region motif is present at residues 271–275 (KMSKS). Lys274 contributes to the ATP binding site.

It belongs to the class-I aminoacyl-tRNA synthetase family. Monomer. It depends on Zn(2+) as a cofactor.

It localises to the cytoplasm. It catalyses the reaction tRNA(Cys) + L-cysteine + ATP = L-cysteinyl-tRNA(Cys) + AMP + diphosphate. The chain is Cysteine--tRNA ligase from Janthinobacterium sp. (strain Marseille) (Minibacterium massiliensis).